The primary structure comprises 573 residues: Mucin-13 (573 aa).

An N-terminal signal peptide occupies residues 1–17; it reads MKGFLLLSLSLLLVTVG. The span at 16–234 shows a compositional bias: low complexity; it reads VGSSSQASST…VPSGGSTGPS (219 aa). Positions 16–237 are disordered; sequence VGSSSQASST…GGSTGPSDLC (222 aa). Residues 18–480 lie on the Extracellular side of the membrane; sequence SSSQASSTTS…FGYSGMNCKD (463 aa). The EGF-like 1 domain occupies 233-273; the sequence is PSDLCNPNPCKGTASCVKLHSKHFCLCLEGYYYNSSLSSCV. 3 cysteine pairs are disulfide-bonded: Cys237-Cys248, Cys242-Cys257, and Cys259-Cys272. Asn266, Asn316, and Asn397 each carry an N-linked (GlcNAc...) asparagine glycan. In terms of domain architecture, SEA spans 274–391; it reads KGTTFPGDIS…DYVSINLCDH (118 aa). EGF-like domains are found at residues 385–425 and 425–467; these read SINL…PFCV and VAVT…RKCE. Disulfide bonds link Cys389-Cys402, Cys394-Cys408, Cys410-Cys424, Cys429-Cys441, Cys433-Cys451, and Cys453-Cys466. The chain crosses the membrane as a helical span at residues 481–508; the sequence is QFQLILTIVGTIAGALILILLIAFIVSA. The Cytoplasmic portion of the chain corresponds to 509–573; the sequence is RSKNKKKDGE…NQRSMPRPDY (65 aa). The segment at 548–573 is disordered; it reads PKVRTGVPSQTPNPYANQRSMPRPDY. The span at 554–567 shows a compositional bias: polar residues; it reads VPSQTPNPYANQRS.

Homodimer of beta subunits. Cleaved into two subunits, alpha and beta, probably between the first EGF domain and the SEA domain. Beta subunit contains the cytoplasmic tail and alpha subunit the extracellular tail. The homooligomerization into dimers is dependent on intrachain disulfide bonds. In terms of processing, highly N-glycosylated.

It is found in the cell membrane. The protein resides in the secreted. Its function is as follows. Epithelial and hemopoietic transmembrane mucin that may play a role in cell signaling. In Mus musculus (Mouse), this protein is Mucin-13 (Muc13).